The sequence spans 270 residues: tRNA pseudouridine synthase A (270 aa).

Aspartate 60 functions as the Nucleophile in the catalytic mechanism. Tyrosine 118 provides a ligand contact to substrate.

This sequence belongs to the tRNA pseudouridine synthase TruA family. As to quaternary structure, homodimer.

It carries out the reaction uridine(38/39/40) in tRNA = pseudouridine(38/39/40) in tRNA. Its function is as follows. Formation of pseudouridine at positions 38, 39 and 40 in the anticodon stem and loop of transfer RNAs. The sequence is that of tRNA pseudouridine synthase A from Cronobacter sakazakii (strain ATCC BAA-894) (Enterobacter sakazakii).